The following is a 690-amino-acid chain: Methionine--tRNA ligase (690 aa).

The 'HIGH' region motif lies at 13–23 (PYANGQIHIGH). The Zn(2+) site is built by cysteine 144, cysteine 147, cysteine 157, and cysteine 160. Positions 335–339 (KMSKS) match the 'KMSKS' region motif. An ATP-binding site is contributed by lysine 338. The tRNA-binding domain maps to 584–690 (DFAKIDLRVA…SGAVPGMRIR (107 aa)).

This sequence belongs to the class-I aminoacyl-tRNA synthetase family. MetG type 1 subfamily. As to quaternary structure, homodimer. Requires Zn(2+) as cofactor.

It is found in the cytoplasm. It catalyses the reaction tRNA(Met) + L-methionine + ATP = L-methionyl-tRNA(Met) + AMP + diphosphate. In terms of biological role, is required not only for elongation of protein synthesis but also for the initiation of all mRNA translation through initiator tRNA(fMet) aminoacylation. This chain is Methionine--tRNA ligase, found in Cupriavidus metallidurans (strain ATCC 43123 / DSM 2839 / NBRC 102507 / CH34) (Ralstonia metallidurans).